The following is a 313-amino-acid chain: MTLQQIKEIYSRPLTELILQALEIHNKNFGNDIELCSLKSIKTGTCPEDCKYCPQSGHYNTSIEKHKLLDKDSILAEAKNAKDAGSKRFCMGAAWKHIPKKDFDQVAEIITEVKNLGLETCVTLGSINADEATKLKQAGLDYYNHNLDTSREFYPEIITTRKFEERIETIRNVANADINVCCGGILGMGESLDDRFNLLLELLQLPAAPKSIPINTLIPVKGTPLGDKYTNAQIDSFELVKFIATTRILFPQARLRLSAGRENMSLETQTLCFLAGINSIFYGNKLLTENNATVNSDNFLLAKLGLKSNAELC.

The region spanning 28–258 (NFGNDIELCS…LFPQARLRLS (231 aa)) is the Radical SAM core domain. [4Fe-4S] cluster contacts are provided by Cys46, Cys50, and Cys53. Cys90, Cys121, Cys181, and Arg256 together coordinate [2Fe-2S] cluster.

Belongs to the radical SAM superfamily. Biotin synthase family. In terms of assembly, homodimer. [4Fe-4S] cluster serves as cofactor. It depends on [2Fe-2S] cluster as a cofactor.

The enzyme catalyses (4R,5S)-dethiobiotin + (sulfur carrier)-SH + 2 reduced [2Fe-2S]-[ferredoxin] + 2 S-adenosyl-L-methionine = (sulfur carrier)-H + biotin + 2 5'-deoxyadenosine + 2 L-methionine + 2 oxidized [2Fe-2S]-[ferredoxin]. It participates in cofactor biosynthesis; biotin biosynthesis; biotin from 7,8-diaminononanoate: step 2/2. In terms of biological role, catalyzes the conversion of dethiobiotin (DTB) to biotin by the insertion of a sulfur atom into dethiobiotin via a radical-based mechanism. The chain is Biotin synthase from Francisella tularensis subsp. mediasiatica (strain FSC147).